The following is a 455-amino-acid chain: Asparagine--tRNA ligase (455 aa).

The protein belongs to the class-II aminoacyl-tRNA synthetase family. Homodimer.

It localises to the cytoplasm. It carries out the reaction tRNA(Asn) + L-asparagine + ATP = L-asparaginyl-tRNA(Asn) + AMP + diphosphate + H(+). This Mycoplasma pneumoniae (strain ATCC 29342 / M129 / Subtype 1) (Mycoplasmoides pneumoniae) protein is Asparagine--tRNA ligase.